The following is an 83-amino-acid chain: Host transcription reprogramming factor 9 (83 aa).

The first 19 residues, 1-19 (MQFSKITLAIVLYALGTAA), serve as a signal peptide directing secretion. The C2H2-type zinc-finger motif lies at 54 to 77 (YRCDKCEKEFVKGNDFFNHGGRGH).

Its subcellular location is the secreted. The protein resides in the host nucleus. Probable secreted effector that translocates into the nuclei of host cells to reprogram the expression of targeted genes by binding on effector binding elements in rice. The polypeptide is Host transcription reprogramming factor 9 (Pyricularia oryzae (strain 70-15 / ATCC MYA-4617 / FGSC 8958) (Rice blast fungus)).